The chain runs to 165 residues: Protein AIG2 C (165 aa).

14–19 (YGSILE) contributes to the substrate binding site. Catalysis depends on Glu-82, which acts as the Proton acceptor.

The protein belongs to the gamma-glutamylcyclotransferase family. As to expression, expressed in floral organs, leaves, stems and roots.

Its function is as follows. Putative gamma-glutamylcyclotransferase. This is Protein AIG2 C from Arabidopsis thaliana (Mouse-ear cress).